Consider the following 89-residue polypeptide: Small ribosomal subunit protein uS15 (89 aa).

This sequence belongs to the universal ribosomal protein uS15 family. In terms of assembly, part of the 30S ribosomal subunit. Forms a bridge to the 50S subunit in the 70S ribosome, contacting the 23S rRNA.

In terms of biological role, one of the primary rRNA binding proteins, it binds directly to 16S rRNA where it helps nucleate assembly of the platform of the 30S subunit by binding and bridging several RNA helices of the 16S rRNA. Forms an intersubunit bridge (bridge B4) with the 23S rRNA of the 50S subunit in the ribosome. The chain is Small ribosomal subunit protein uS15 from Syntrophobacter fumaroxidans (strain DSM 10017 / MPOB).